A 229-amino-acid polypeptide reads, in one-letter code: Sugar fermentation stimulation protein homolog (229 aa).

It belongs to the SfsA family.

This chain is Sugar fermentation stimulation protein homolog, found in Clostridium novyi (strain NT).